Here is a 480-residue protein sequence, read N- to C-terminus: Aspartyl/glutamyl-tRNA(Asn/Gln) amidotransferase subunit B (480 aa).

This sequence belongs to the GatB/GatE family. GatB subfamily. As to quaternary structure, heterotrimer of A, B and C subunits.

It carries out the reaction L-glutamyl-tRNA(Gln) + L-glutamine + ATP + H2O = L-glutaminyl-tRNA(Gln) + L-glutamate + ADP + phosphate + H(+). The catalysed reaction is L-aspartyl-tRNA(Asn) + L-glutamine + ATP + H2O = L-asparaginyl-tRNA(Asn) + L-glutamate + ADP + phosphate + 2 H(+). Allows the formation of correctly charged Asn-tRNA(Asn) or Gln-tRNA(Gln) through the transamidation of misacylated Asp-tRNA(Asn) or Glu-tRNA(Gln) in organisms which lack either or both of asparaginyl-tRNA or glutaminyl-tRNA synthetases. The reaction takes place in the presence of glutamine and ATP through an activated phospho-Asp-tRNA(Asn) or phospho-Glu-tRNA(Gln). This is Aspartyl/glutamyl-tRNA(Asn/Gln) amidotransferase subunit B from Streptococcus pneumoniae serotype 19F (strain G54).